The chain runs to 239 residues: Wilms tumor protein homolog (239 aa).

The 9aaTAD signature appears at 43-51 (MTWNQMNLG). 3 C2H2-type zinc fingers span residues 113–137 (FMCA…SRKH), 143–167 (YQCD…QRRH), and 173–195 (FQCK…TRTH). 2 important for interaction with target DNA regions span residues 157–171 (SDQL…TGVK) and 183–191 (SRSDHLKTH). The KTS motif motif lies at 198 to 200 (KTS). A C2H2-type 4 zinc finger spans residues 204–228 (FSCRWPSCQKKFARSDELVRHHNMH). Residue Lys-234 forms a Glycyl lysine isopeptide (Lys-Gly) (interchain with G-Cter in SUMO2) linkage.

Belongs to the EGR C2H2-type zinc-finger protein family. As to quaternary structure, interacts with ZNF224 via the zinc-finger region. Interacts with WTAP, AMER1 and SRY. Homodimer. Interacts with WTIP. Interacts with actively translating polysomes. Detected in nuclear ribonucleoprotein (mRNP) particles. Interacts with U2AF2. Interacts with HNRNPU via the zinc-finger region. Interacts with CITED2.

The protein resides in the nucleus speckle. It localises to the nucleus. Its subcellular location is the nucleoplasm. The protein localises to the cytoplasm. In terms of biological role, transcription factor that plays an important role in cellular development and cell survival. Recognizes and binds to the DNA sequence 5'-GCG(T/G)GGGCG-3'. Regulates the expression of numerous target genes, including EPO. Plays an essential role for development of the urogenital system. It has a tumor suppressor as well as an oncogenic role in tumor formation. Function may be isoform-specific: isoforms lacking the KTS motif may act as transcription factors. Isoforms containing the KTS motif may bind mRNA and play a role in mRNA metabolism or splicing. The protein is Wilms tumor protein homolog (WT1) of Sminthopsis macroura (Stripe-faced dunnart).